A 172-amino-acid polypeptide reads, in one-letter code: Adenine phosphoribosyltransferase (172 aa).

The protein belongs to the purine/pyrimidine phosphoribosyltransferase family. As to quaternary structure, homodimer.

The protein localises to the cytoplasm. It catalyses the reaction AMP + diphosphate = 5-phospho-alpha-D-ribose 1-diphosphate + adenine. The protein operates within purine metabolism; AMP biosynthesis via salvage pathway; AMP from adenine: step 1/1. In terms of biological role, catalyzes a salvage reaction resulting in the formation of AMP, that is energically less costly than de novo synthesis. The protein is Adenine phosphoribosyltransferase of Nostoc punctiforme (strain ATCC 29133 / PCC 73102).